The following is a 223-amino-acid chain: Putative germin-like protein subfamily 1 member 12 (223 aa).

The first 24 residues, 1–24 (MNMKNLYLAILYLLAASTLPFAIA), serve as a signal peptide directing secretion. A disulfide bridge links Cys34 with Cys51. The 152-residue stretch at 65–216 (SGLDKARTTE…AFQLDPKVII (152 aa)) folds into the Cupin type-1 domain. A glycan (N-linked (GlcNAc...) asparagine) is linked at Asn81. The Mn(2+) site is built by His114, His116, and Glu121. N-linked (GlcNAc...) asparagine glycosylation occurs at Asn145. His162 provides a ligand contact to Mn(2+).

It belongs to the germin family. Oligomer (believed to be a pentamer but probably hexamer).

It is found in the secreted. The protein localises to the extracellular space. It localises to the apoplast. Functionally, may play a role in plant defense. Probably has no oxalate oxidase activity even if the active site is conserved. This is Putative germin-like protein subfamily 1 member 12 from Arabidopsis thaliana (Mouse-ear cress).